We begin with the raw amino-acid sequence, 381 residues long: Endophilin-A homolog (381 aa).

The segment at 1 to 21 (MSLSGLRKQFNKANQYLSETM) is membrane-binding amphipathic helix. In terms of domain architecture, BAR spans 18-247 (SETMGAAEPT…LGHRIKDAAA (230 aa)). Positions 170-238 (CKKRQQRRDD…QCLENLQQQL (69 aa)) form a coiled coil. Positions 246–323 (AARPREEHVP…PPPLSQQQKP (78 aa)) are disordered. Residues 260 to 271 (ANESRTPRSSFR) are compositionally biased toward polar residues. The segment covering 305 to 317 (YQGPPPGGLPPPL) has biased composition (pro residues). The 60-residue stretch at 320–379 (QQKPQCRALFDFDAQSEGELDFKEGTLIELVSQIDENWYEGRVNGKTGLFPVTYVQVLVP) folds into the SH3 domain.

The protein belongs to the endophilin family. In terms of assembly, may form a homodimer (via the BAR domain). As to expression, expressed in neurons and posterior intestine.

Its subcellular location is the synapse. The protein resides in the cytoplasmic vesicle. The protein localises to the secretory vesicle. It localises to the synaptic vesicle. It is found in the membrane. Functionally, involved in synaptic vesicle (SV) recycling in neurons probably by regulating clathrin-mediated endocytosis. By controlling SV endocytosis, regulates the rate of excitatory postsynaptic currents (EPSCs) at neuromuscular junctions and thus locomotion. In a similar manner, involved in necrotic neuronal cell death induced by abnormal hyperactivation of ion channels. Plays a minor role in responses to mechanical stimuli. Plays a minor role in unc-26/synaptojanin localization to synapses. The chain is Endophilin-A homolog from Caenorhabditis elegans.